Reading from the N-terminus, the 239-residue chain is Ribosomal RNA small subunit methyltransferase G (239 aa).

S-adenosyl-L-methionine contacts are provided by residues glycine 77, phenylalanine 82, 128–129 (AE), and arginine 147. Residues 219-239 (RKTPKKYPRKPGTPNKLPIEK) form a disordered region.

It belongs to the methyltransferase superfamily. RNA methyltransferase RsmG family.

The protein localises to the cytoplasm. In terms of biological role, specifically methylates the N7 position of guanine in position 535 of 16S rRNA. This Bacillus cytotoxicus (strain DSM 22905 / CIP 110041 / 391-98 / NVH 391-98) protein is Ribosomal RNA small subunit methyltransferase G.